A 483-amino-acid polypeptide reads, in one-letter code: Siroheme synthase (483 aa).

Residues Met1–Leu203 are precorrin-2 dehydrogenase /sirohydrochlorin ferrochelatase. Residues Ala22–Val23 and Lys43–His44 each bind NAD(+). Residue Ser128 is modified to Phosphoserine. Residues Gly214–Ala483 are uroporphyrinogen-III C-methyltransferase. Pro223 lines the S-adenosyl-L-methionine pocket. Asp246 acts as the Proton acceptor in catalysis. Lys268 serves as the catalytic Proton donor. S-adenosyl-L-methionine contacts are provided by residues Gly299–Asp301, Val304, Thr329–Ala330, Met381, and Gly410.

The protein in the N-terminal section; belongs to the precorrin-2 dehydrogenase / sirohydrochlorin ferrochelatase family. In the C-terminal section; belongs to the precorrin methyltransferase family.

The enzyme catalyses uroporphyrinogen III + 2 S-adenosyl-L-methionine = precorrin-2 + 2 S-adenosyl-L-homocysteine + H(+). It carries out the reaction precorrin-2 + NAD(+) = sirohydrochlorin + NADH + 2 H(+). It catalyses the reaction siroheme + 2 H(+) = sirohydrochlorin + Fe(2+). It functions in the pathway cofactor biosynthesis; adenosylcobalamin biosynthesis; precorrin-2 from uroporphyrinogen III: step 1/1. Its pathway is cofactor biosynthesis; adenosylcobalamin biosynthesis; sirohydrochlorin from precorrin-2: step 1/1. It participates in porphyrin-containing compound metabolism; siroheme biosynthesis; precorrin-2 from uroporphyrinogen III: step 1/1. The protein operates within porphyrin-containing compound metabolism; siroheme biosynthesis; siroheme from sirohydrochlorin: step 1/1. It functions in the pathway porphyrin-containing compound metabolism; siroheme biosynthesis; sirohydrochlorin from precorrin-2: step 1/1. Multifunctional enzyme that catalyzes the SAM-dependent methylations of uroporphyrinogen III at position C-2 and C-7 to form precorrin-2 via precorrin-1. Then it catalyzes the NAD-dependent ring dehydrogenation of precorrin-2 to yield sirohydrochlorin. Finally, it catalyzes the ferrochelation of sirohydrochlorin to yield siroheme. This is Siroheme synthase from Neisseria meningitidis serogroup C / serotype 2a (strain ATCC 700532 / DSM 15464 / FAM18).